A 142-amino-acid chain; its full sequence is Universal stress protein G (142 aa).

The protein belongs to the universal stress protein A family.

This Shigella flexneri protein is Universal stress protein G (uspG).